The primary structure comprises 72 residues: Cell division protein ZapB (72 aa).

Residues 1–71 are a coiled coil; that stretch reads MSLEILDQLE…LRSLLGRIDN (71 aa). The segment at 36-56 is disordered; that stretch reads LSRQTNEQLRSENEHLKTEHH. The span at 44–56 shows a compositional bias: basic and acidic residues; sequence LRSENEHLKTEHH.

Belongs to the ZapB family. In terms of assembly, homodimer. The ends of the coiled-coil dimer bind to each other, forming polymers. Interacts with FtsZ.

It localises to the cytoplasm. Its function is as follows. Non-essential, abundant cell division factor that is required for proper Z-ring formation. It is recruited early to the divisome by direct interaction with FtsZ, stimulating Z-ring assembly and thereby promoting cell division earlier in the cell cycle. Its recruitment to the Z-ring requires functional FtsA or ZipA. The polypeptide is Cell division protein ZapB (Histophilus somni (strain 129Pt) (Haemophilus somnus)).